We begin with the raw amino-acid sequence, 362 residues long: UDP-N-acetylglucosamine--N-acetylmuramyl-(pentapeptide) pyrophosphoryl-undecaprenol N-acetylglucosamine transferase (362 aa).

UDP-N-acetyl-alpha-D-glucosamine is bound by residues 15–17, Asn127, Arg165, Ser191, Ile247, 266–271, and Gln292; these read TGG and ALTVSE.

This sequence belongs to the glycosyltransferase 28 family. MurG subfamily.

The protein resides in the cell inner membrane. It catalyses the reaction di-trans,octa-cis-undecaprenyl diphospho-N-acetyl-alpha-D-muramoyl-L-alanyl-D-glutamyl-meso-2,6-diaminopimeloyl-D-alanyl-D-alanine + UDP-N-acetyl-alpha-D-glucosamine = di-trans,octa-cis-undecaprenyl diphospho-[N-acetyl-alpha-D-glucosaminyl-(1-&gt;4)]-N-acetyl-alpha-D-muramoyl-L-alanyl-D-glutamyl-meso-2,6-diaminopimeloyl-D-alanyl-D-alanine + UDP + H(+). It participates in cell wall biogenesis; peptidoglycan biosynthesis. In terms of biological role, cell wall formation. Catalyzes the transfer of a GlcNAc subunit on undecaprenyl-pyrophosphoryl-MurNAc-pentapeptide (lipid intermediate I) to form undecaprenyl-pyrophosphoryl-MurNAc-(pentapeptide)GlcNAc (lipid intermediate II). The polypeptide is UDP-N-acetylglucosamine--N-acetylmuramyl-(pentapeptide) pyrophosphoryl-undecaprenol N-acetylglucosamine transferase (Shewanella sp. (strain ANA-3)).